A 344-amino-acid chain; its full sequence is MAENKQVDTEINGEDFTKDVTADGPGSENGDAGAAGSTNGSSDNQSAASGQRDDDRKLFVGGLSWETTEKELRDHFGKYGEIESINVKTDPQTGRSRGFAFIVFTNTEAIDKVSAADEHIINSKKVDPKKAKARHGKIFVGGLTTEISDEEIKTYFGQFGNIVEVEMPFDKQKSQRKGFCFITFDSEQVVTDLLKTPKQKIAGKEVDVKRATPKPENQMMGGMRGGPRGGMRGGRGGYGGRGGYNNQWDGQGSYGGYGGGYGGYGAGGYGDYYAGGYYNGYDYGYDGYGYGGGFEGNGYGGGGGGNMGGGRGGPRGGGGPKGGGGFNGGKQRGGGGRQQRHQPY.

A disordered region spans residues 1–55; sequence MAENKQVDTEINGEDFTKDVTADGPGSENGDAGAAGSTNGSSDNQSAASGQRDDD. Over residues 36–49 the composition is skewed to polar residues; the sequence is GSTNGSSDNQSAAS. 2 consecutive RRM domains span residues 56 to 138 and 136 to 213; these read RKLF…HGKI and GKIF…RATP. Position 148 is a phosphoserine (Ser-148). Disordered stretches follow at residues 214–238 and 301–344; these read KPEN…RGGY and GGGG…HQPY. The segment at 215–254 is M9-like motif; that stretch reads PENQMMGGMRGGPRGGMRGGRGGYGGRGGYNNQWDGQGSY. 2 stretches are compositionally biased toward gly residues: residues 222-238 and 301-337; these read GMRG…RGGY and GGGG…GGGR. Positions 300 to 338 are M9 motif; that stretch reads GGGGGGNMGGGRGGPRGGGGPKGGGGFNGGKQRGGGGRQ.

As to quaternary structure, interacts with bru1/Bruno; the interaction is direct but weak, and may play a role in regulation of grk mRNA localization and translation. Interacts (probably via M9 and M9-like motifs) with Tnpo/Transportin; the interaction is direct and is involved in nuclear localization. Interacts with fs(1)K10 (via N-terminus); may be involved in localization of sqd in the oocyte during oogenesis. In terms of assembly, interacts (via C-terminus) with Hrb27C; the interaction is RNA dependent. Does not interact with Tnpo/Transportin. Interacts with fs(1)K10 (via N-terminus); may be involved in localization of sqd in the oocyte during oogenesis. As to quaternary structure, interacts (probably via M9-like motif) with Tnpo/Transportin; the interaction is direct and is involved in nuclear localization. Interacts with fs(1)K10 (via N-terminus); may be involved in localization of sqd in the oocyte during oogenesis.

It is found in the nucleus. The protein resides in the cytoplasm. In terms of biological role, component of ribonucleosomes. Could be needed to organize a concentration gradient of a dorsalizing morphogen (Dm) originating in the germinal vesicle. At least one of the isoforms is essential in somatic tissues. Interacts with grk mRNA (via 3' UTR) and involved in its localization to the dorsal anterior region of the oocyte during dorsal-ventral axis determination; may function as a ribonuclear protein complex together with otu and Hrb27C. Required for polytene chromosome dispersal in nurse cells during oogenesis; nuclear isoforms play a greater role in this than cytoplasmic isoforms. Its function is as follows. Required nonredundantly with isoform A/sqdA for dorsoventral pattern determination during oogenesis. May be important in somatic tissues. Required nonredundantly with isoform B/SqdS for dorsoventral pattern determination during oogenesis. Functionally, may lack a role in dorsoventral pattern determination during oogenesis. May be important in somatic tissues. This is RNA-binding protein squid from Drosophila melanogaster (Fruit fly).